Here is a 418-residue protein sequence, read N- to C-terminus: Glutamyl-tRNA reductase (418 aa).

Substrate is bound by residues 49–52, Ser109, 114–116, and Gln120; these read TCNR and EPQ. Residue Cys50 is the Nucleophile of the active site. NADP(+) is bound at residue 189–194; that stretch reads GAGETI.

Belongs to the glutamyl-tRNA reductase family. Homodimer.

The enzyme catalyses (S)-4-amino-5-oxopentanoate + tRNA(Glu) + NADP(+) = L-glutamyl-tRNA(Glu) + NADPH + H(+). It participates in porphyrin-containing compound metabolism; protoporphyrin-IX biosynthesis; 5-aminolevulinate from L-glutamyl-tRNA(Glu): step 1/2. In terms of biological role, catalyzes the NADPH-dependent reduction of glutamyl-tRNA(Glu) to glutamate 1-semialdehyde (GSA). The sequence is that of Glutamyl-tRNA reductase from Salmonella heidelberg (strain SL476).